Here is a 410-residue protein sequence, read N- to C-terminus: Caspase-1 (410 aa).

Residues 1–91 form the CARD domain; that stretch reads MADKVLKGKR…HLAETLGLSS (91 aa). Positions 1 to 119 are excised as a propeptide; that stretch reads MADKVLKGKR…PLPASVNNMP (119 aa). The span at 88-104 shows a compositional bias: polar residues; the sequence is GLSSSPQSGNSQNTTDS. The interval 88–125 is disordered; that stretch reads GLSSSPQSGNSQNTTDSEVAFPPLPASVNNMPGPAEPE. Catalysis depends on residues His235 and Cys284. Residues 297–322 constitute a propeptide that is removed on maturation; it reads SPAAPMDSTSQMGSSLSQVGDNLEDD.

Belongs to the peptidase C14A family. As to quaternary structure, heterotetramer that consists of two anti-parallel arranged heterodimers, each one formed by a 20 kDa (Caspase-1 subunit p20) and a 10 kDa (Caspase-1 subunit p10) subunit. May be a component of the inflammasome, a protein complex which also includes PYCARD, CARD8 and NLRP2 and whose function would be the activation of pro-inflammatory caspases. Component of the AIM2 PANoptosome complex, a multiprotein complex that drives inflammatory cell death (PANoptosis). Both the p10 and p20 subunits interact with MEFV. Interacts with CARD17P/INCA and CARD18. Interacts with SERPINB1; this interaction regulates CASP1 activity. In terms of assembly, heterotetramer that consists of two anti-parallel arranged heterodimers, each one formed by a 20 kDa (Caspase-1 subunit p20) and a 10 kDa (Caspase-1 subunit p10) subunit. In terms of processing, the two subunits are derived from the precursor sequence by an autocatalytic mechanism. Post-translationally, ubiquitinated via 'Lys-11'-linked polyubiquitination. Deubiquitinated by USP8.

The protein resides in the cytoplasm. It is found in the cell membrane. It catalyses the reaction Strict requirement for an Asp residue at position P1 and has a preferred cleavage sequence of Tyr-Val-Ala-Asp-|-.. Its function is as follows. Thiol protease involved in a variety of inflammatory processes by proteolytically cleaving other proteins, such as the precursors of the inflammatory cytokines interleukin-1 beta (IL1B) and interleukin 18 (IL18) as well as the pyroptosis inducer Gasdermin-D (GSDMD), into active mature peptides. Plays a key role in cell immunity as an inflammatory response initiator: once activated through formation of an inflammasome complex, it initiates a pro-inflammatory response through the cleavage of the two inflammatory cytokines IL1B and IL18, releasing the mature cytokines which are involved in a variety of inflammatory processes. Cleaves a tetrapeptide after an Asp residue at position P1. Also initiates pyroptosis, a programmed lytic cell death pathway, through cleavage of GSDMD. In contrast to cleavage of interleukin IL1B, recognition and cleavage of GSDMD is not strictly dependent on the consensus cleavage site but depends on an exosite interface on CASP1 that recognizes and binds the Gasdermin-D, C-terminal (GSDMD-CT) part. Cleaves and activates CASP7 in response to bacterial infection, promoting plasma membrane repair. Upon inflammasome activation, during DNA virus infection but not RNA virus challenge, controls antiviral immunity through the cleavage of CGAS, rendering it inactive. In apoptotic cells, cleaves SPHK2 which is released from cells and remains enzymatically active extracellularly. The sequence is that of Caspase-1 (CASP1) from Felis catus (Cat).